Here is an 880-residue protein sequence, read N- to C-terminus: Alanine--tRNA ligase (880 aa).

His566, His570, Cys668, and His672 together coordinate Zn(2+).

This sequence belongs to the class-II aminoacyl-tRNA synthetase family. Zn(2+) serves as cofactor.

It localises to the cytoplasm. The enzyme catalyses tRNA(Ala) + L-alanine + ATP = L-alanyl-tRNA(Ala) + AMP + diphosphate. In terms of biological role, catalyzes the attachment of alanine to tRNA(Ala) in a two-step reaction: alanine is first activated by ATP to form Ala-AMP and then transferred to the acceptor end of tRNA(Ala). Also edits incorrectly charged Ser-tRNA(Ala) and Gly-tRNA(Ala) via its editing domain. This Nostoc punctiforme (strain ATCC 29133 / PCC 73102) protein is Alanine--tRNA ligase.